Reading from the N-terminus, the 189-residue chain is Xanthine phosphoribosyltransferase (189 aa).

Leu-20 and Asn-27 together coordinate xanthine. 128 to 132 contacts 5-phospho-alpha-D-ribose 1-diphosphate; that stretch reads ANGEA. Lys-156 contributes to the xanthine binding site.

The protein belongs to the purine/pyrimidine phosphoribosyltransferase family. Xpt subfamily. In terms of assembly, homodimer.

The protein resides in the cytoplasm. It catalyses the reaction XMP + diphosphate = xanthine + 5-phospho-alpha-D-ribose 1-diphosphate. Its pathway is purine metabolism; XMP biosynthesis via salvage pathway; XMP from xanthine: step 1/1. Converts the preformed base xanthine, a product of nucleic acid breakdown, to xanthosine 5'-monophosphate (XMP), so it can be reused for RNA or DNA synthesis. This Clostridium acetobutylicum (strain ATCC 824 / DSM 792 / JCM 1419 / IAM 19013 / LMG 5710 / NBRC 13948 / NRRL B-527 / VKM B-1787 / 2291 / W) protein is Xanthine phosphoribosyltransferase.